The primary structure comprises 247 residues: 14-3-3 protein gamma-A (247 aa).

This sequence belongs to the 14-3-3 family. Homodimer, and heterodimer with other family members.

It is found in the cytoplasm. Adapter protein implicated in the regulation of a large spectrum of both general and specialized signaling pathways. Binds to a large number of partners, usually by recognition of a phosphoserine or phosphothreonine motif. Binding generally results in the modulation of the activity of the binding partner. The polypeptide is 14-3-3 protein gamma-A (ywhag-a) (Xenopus laevis (African clawed frog)).